A 1365-amino-acid chain; its full sequence is Nuclear pore complex protein Nup154 (1365 aa).

Residues 1-508 (MTLPQAQLDF…GTHIIEVLKM (508 aa)) form a required for binding to Nup93-1 and anchoring to the nuclear pore complex region. The interval 508–986 (MVDVLRQILL…KSINPLKGTA (479 aa)) is required for binding to chromatin.

Belongs to the non-repetitive/WGA-negative nucleoporin family. As to quaternary structure, interacts (via N-terminus) with Nup93-1. Interacts with Nup35. Interacts with cup.

The protein resides in the nucleus. Its subcellular location is the nuclear pore complex. The protein localises to the chromosome. It localises to the nucleus membrane. It is found in the cytoplasm. Component of the nuclear pore complex. Has a role in the organization of the inner nuclear membrane proteins at the nuclear envelope. In germ cells, plays a role in the nuclear localization of components of the dpp signaling pathways, such as Medea and phosphorylated Mad. Binds to chromatin, and together with Nup62 and Nup93-1, contributes to karyosome morphology and chromatin organization including attachment to the nuclear envelope in oocytes and nurse cells. Has a role in female fertility including egg chamber development; in nurse cells, has a role in the organization of F-actin in subcortical and cytoplasmic actin filaments important for the transfer of cytoplasm from nurse cells to the growing oocytes. Has a role in male spermatogenesis and fertility. Has a role in germ line cell proliferation. In Drosophila melanogaster (Fruit fly), this protein is Nuclear pore complex protein Nup154.